The chain runs to 1193 residues: MVYFGDRQRDRNRDRSNQKVERIIHDEEFGEENVELVDSEWADFEKFICQLRKRRNSAMSMEEELRHVQRHPKIKSHAFYPCPPPAENARDSDSSDDDDPIGYIDTLMYGRYTKDLGEFAKDEARKLKILEKRRKQEDKQRNKELLGKHSTRAKRVSSWIWRHTVARLGEDWVFLALLGIIMALLSFIMDKGISICTNARIWLYRDLTSQPFVQYIAWVSLPVCLILFSAGFVHLIAPQSIGSGIPEMKTILRGVQLKEYLTFKTLVAKVIGLTATLGSGMPLGKEGPFVHIASIVAQLLSKLVTSFQGIYENESRNSEMLAAACAVGVGACFAAPVGGVLFSIEVTTTYFAVRNYWRGFFAAVCGATVFRLLAVWFQNADTVRALFLTNFTTEFPFDPQELFVFALIGLVCGLGGASYVWVHRRYVLFMRSNKRMNKFLQKNRFLYPGFLALLVSSISFPLGTGQFLAGELSTHEQVTQLFSNFTWSRDDLTVEQAAVVTHWMTSYTSVFGNLVIYTLFTFVVSIIASTIPVPSGMFIPVFKIGAGFGRLVGEFMAVTFPHGVRYGGRLSPIMPGGYAVVGAAAFSGSVTHTVSVAVIIFEMTGQITHVVPVMIAVLVANAVAALLQPSIYDSIILIKKLPYLPDLLPSSSGMYSIFVEDFMVRDVKYIWHGISYQKLKEVLKLNKTLRSLPLVDSPDNMILLGSVQRYELIKMIEKHIGREKRMEVAQKWQKEAQERALEEEKKKQEVELKMRRPSRFEVLPAPDILSLRQIANDEMLPPKKRAETMHGSLAPRKSILKKTNSFNLKTYAQPMGHSPSITPYTTITGNSEFRIRSAFEAIFKKSTTLQDVQPDPETGSLSPAASNHEVEVPRTPSTPGVSKKVQLPAQSNWDFVTDQIMLQVNPISTESNKMPAEKDFTDKALSNNGDSSKQSPSIKFKANKVADVNRSPQTAKRCSKIRFANEVGVNGSPTRTKCKIKPENVLGYSIEDVDETTNPESLAESIQKPKSVRLPRERVIDMSPEDQKQWELEEMLKPIDLQKANVHIDPSPFQLVERTSILKVHSLFSMVGINHAYVTKIGRLVGVVGLKELRKAIEDINSNSFVPPTRDEDADEKPAVEKPLLSTNSSDKAVDMTVTSMDSALSNSENCSDIEMEHIKHTDKGTVSLTMPPQESKQSPSADKSNTENGNHA.

Over Met1–Leu168 the chain is Cytoplasmic. The segment at Ser76–Asp97 is disordered. Transmembrane regions (helical) follow at residues Gly169 to Tyr204 and Val213 to Ile236. Positions Gly242–Pro246 match the Selectivity filter part_1 motif. Ser243 provides a ligand contact to chloride. An intramembrane region (helical) is located at residues Ile245–Leu252. The next 2 helical transmembrane spans lie at Leu261 to Ser279 and Glu286 to Val304. Residues Gly284–Pro288 carry the Selectivity filter part_2 motif. 2 consecutive intramembrane regions (helical) follow at residues Met320 to Cys332 and Pro336 to Ile344. Helical transmembrane passes span Tyr356 to Leu373, Leu402 to Met430, Phe439 to Ile458, Phe511 to Thr530, and Gly536 to Phe555. The Selectivity filter part_3 motif lies at Gly536–Pro540. Phe538 provides a ligand contact to chloride. The segment at residues Gly576–Val590 is an intramembrane region (helical). Residues Thr591–His592 constitute an intramembrane region (note=Loop between two helices). The helical intramembrane region spans Thr593–Thr604. The segment at residues Gly605–His609 is an intramembrane region (note=Loop between two helices). The helical transmembrane segment at Val610 to Leu626 threads the bilayer. At Leu627 to Ala1193 the chain is on the cytoplasmic side. Residue Tyr632 coordinates chloride. The region spanning Met663–Glu723 is the CBS 1 domain. Disordered regions lie at residues Thr848 to Lys884, Asn1103 to Lys1122, and Ile1159 to Ala1193. The region spanning Ile1048–Phe1105 is the CBS 2 domain. Residues Gly1165–Ala1193 show a composition bias toward polar residues.

This sequence belongs to the chloride channel (TC 2.A.49) family. As to expression, at embryonic stages 13-16, expressed in a subset of the midline cells of the midline primordium and in all of the midline glia. Expressed along the Z-line of the sarcomere in larval longitudinal muscles.

It localises to the membrane. Its function is as follows. Voltage-gated chloride channel. Chloride channels have several functions including the regulation of cell volume; membrane potential stabilization, signal transduction and transepithelial transport. The chain is Chloride channel protein 2 (ClC-a) from Drosophila melanogaster (Fruit fly).